A 177-amino-acid chain; its full sequence is Large ribosomal subunit protein uL6 (177 aa).

This sequence belongs to the universal ribosomal protein uL6 family. Part of the 50S ribosomal subunit.

Functionally, this protein binds to the 23S rRNA, and is important in its secondary structure. It is located near the subunit interface in the base of the L7/L12 stalk, and near the tRNA binding site of the peptidyltransferase center. The protein is Large ribosomal subunit protein uL6 of Cupriavidus necator (strain ATCC 17699 / DSM 428 / KCTC 22496 / NCIMB 10442 / H16 / Stanier 337) (Ralstonia eutropha).